Consider the following 318-residue polypeptide: tRNA-dihydrouridine(16) synthase (318 aa).

FMN-binding positions include 7–9 and glutamine 68; that span reads PME. Catalysis depends on cysteine 98, which acts as the Proton donor. Residues lysine 139, 200–202, and 224–225 each bind FMN; these read NGE and CR.

This sequence belongs to the Dus family. DusC subfamily. It depends on FMN as a cofactor.

It carries out the reaction 5,6-dihydrouridine(16) in tRNA + NADP(+) = uridine(16) in tRNA + NADPH + H(+). It catalyses the reaction 5,6-dihydrouridine(16) in tRNA + NAD(+) = uridine(16) in tRNA + NADH + H(+). Its function is as follows. Catalyzes the synthesis of 5,6-dihydrouridine (D), a modified base found in the D-loop of most tRNAs, via the reduction of the C5-C6 double bond in target uridines. Specifically modifies U16 in tRNAs. This chain is tRNA-dihydrouridine(16) synthase, found in Vibrio vulnificus (strain CMCP6).